The chain runs to 306 residues: Agmatinase (306 aa).

His126, Asp149, His151, Asp153, Asp230, and Asp232 together coordinate Mn(2+).

It belongs to the arginase family. Agmatinase subfamily. Mn(2+) serves as cofactor.

The catalysed reaction is agmatine + H2O = urea + putrescine. It participates in amine and polyamine biosynthesis; putrescine biosynthesis via agmatine pathway; putrescine from agmatine: step 1/1. Functionally, catalyzes the formation of putrescine from agmatine. This chain is Agmatinase, found in Shigella sonnei (strain Ss046).